A 244-amino-acid polypeptide reads, in one-letter code: Phosphonates import ATP-binding protein PhnC 2 (244 aa).

The region spanning 3–242 (LRVEGLKKVY…ELTDYTVDQL (240 aa)) is the ABC transporter domain. Residue 36–43 (GPSGAGKS) coordinates ATP.

The protein belongs to the ABC transporter superfamily. Phosphonates importer (TC 3.A.1.9.1) family. In terms of assembly, the complex is composed of two ATP-binding proteins (PhnC), two transmembrane proteins (PhnE) and a solute-binding protein (PhnD).

The protein localises to the cell membrane. The catalysed reaction is phosphonate(out) + ATP + H2O = phosphonate(in) + ADP + phosphate + H(+). Its function is as follows. Part of the ABC transporter complex PhnCDE involved in phosphonates import. Responsible for energy coupling to the transport system. The chain is Phosphonates import ATP-binding protein PhnC 2 from Halalkalibacterium halodurans (strain ATCC BAA-125 / DSM 18197 / FERM 7344 / JCM 9153 / C-125) (Bacillus halodurans).